The chain runs to 292 residues: Homoserine kinase (292 aa).

P84–A94 lines the ATP pocket.

Belongs to the GHMP kinase family. Homoserine kinase subfamily.

It localises to the cytoplasm. The catalysed reaction is L-homoserine + ATP = O-phospho-L-homoserine + ADP + H(+). It functions in the pathway amino-acid biosynthesis; L-threonine biosynthesis; L-threonine from L-aspartate: step 4/5. Its function is as follows. Catalyzes the ATP-dependent phosphorylation of L-homoserine to L-homoserine phosphate. The chain is Homoserine kinase from Campylobacter jejuni subsp. jejuni serotype O:6 (strain 81116 / NCTC 11828).